The primary structure comprises 417 residues: Probable uracil permease (417 aa).

The Cytoplasmic portion of the chain corresponds to 1 to 13 (MTNQNPPVLLEQN). Residues 14–37 (HAKQAFVGLQMLFVAFGALVLVPL) form a helical membrane-spanning segment. Over 38–41 (ITGL) the chain is Periplasmic. The chain crosses the membrane as a helical span at residues 42–61 (NANTALLTAGIGTLLFQLCT). Over 62–64 (GRQ) the chain is Cytoplasmic. Residues 65–81 (VPIFLASSFAFIAPIQY) form a discontinuously helical membrane-spanning segment. Residue F73 coordinates uracil. The Periplasmic segment spans residues 83–90 (VTTWGIAT). A helical membrane pass occupies residues 91–111 (TMGGLVFTGLVYFALSTLVKI). Residues 112-123 (KGAGALQKVFPP) lie on the Cytoplasmic side of the membrane. The chain crosses the membrane as a helical span at residues 124–145 (VVVGPVIIIIGMGLAPVAVDMA). Residues 146–154 (LGKNSTYQY) are Periplasmic-facing. A helical transmembrane segment spans residues 155–170 (NDAVFVSMATLLTTLG). The Cytoplasmic segment spans residues 171-177 (VAVFAKG). Residues 178-198 (MMKLIPIMFGIVVGYILCLFL) traverse the membrane as a helical segment. The Periplasmic portion of the chain corresponds to 199-223 (GLINFQPVIDAPWFSVPEITTPEFK). The helical transmembrane segment at 224 to 247 (LEAILYLLPIAIAPAVEHVGGIMA) threads the bilayer. Uracil is bound at residue E240. Residues 248–260 (ISSVTGKDFLQKP) lie on the Cytoplasmic side of the membrane. A helical membrane pass occupies residues 261–280 (GLHRTLLGDGIATSAASFLG). The discontinuously helical transmembrane segment at 281-297 (GPPNTTYAEVTGAVMLT) threads the bilayer. Residue E289 participates in uracil binding. Over 298-300 (RNF) the chain is Cytoplasmic. Residues 301–318 (NPKIMTWAAVWAIAISFC) form a helical membrane-spanning segment. Topologically, residues 319–331 (GKVGAFLSTIPTI) are periplasmic. Residues 332–353 (VMGGIMMLVFGSIAVVGMSTLI) form a helical membrane-spanning segment. Topologically, residues 354–364 (RGKVDVTEARN) are cytoplasmic. The segment at residues 365 to 400 (LCIISVVMTFGIGGMFVNFGEVSLKGISLCAVVAIL) is an intramembrane region (discontinuously helical). The Cytoplasmic portion of the chain corresponds to 401-416 (LNLILPKAKNTPIEEN).

The protein belongs to the nucleobase:cation symporter-2 (NCS2) (TC 2.A.40) family.

The protein localises to the cell inner membrane. The catalysed reaction is uracil(in) + H(+)(in) = uracil(out) + H(+)(out). In terms of biological role, transport of uracil in the cell. This chain is Probable uracil permease (uraA), found in Pasteurella multocida (strain Pm70).